A 1828-amino-acid polypeptide reads, in one-letter code: InaD-like protein (1828 aa).

One can recognise an L27 domain in the interval 5–65 (PAPDKLQVLQ…SIKQLKGQLS (61 aa)). PDZ domains lie at 134-221 (YIDI…AREP), 248-328 (DVEL…ARDP), and 365-453 (GVEL…VRRK). 2 positions are modified to phosphoserine: Ser459 and Ser522. The PDZ 4 domain occupies 553 to 639 (DAELQKYSKL…PFTLVCCRRL (87 aa)). Ser645 is subject to Phosphoserine. PDZ domains follow at residues 686–758 (IVEL…EVLK) and 1070–1162 (IVEI…QSLS). The segment at 1168–1220 (IPSVHNKANKIANNQDQNTEEKKEKRQGTPPPPMKLPPPYKAPSDDSDENEEE) is disordered. Positions 1196–1208 (TPPPPMKLPPPYK) are enriched in pro residues. Residue Ser1211 is modified to Phosphoserine. The 84-residue stretch at 1241–1324 (IIELEKDKNG…KVKLVFIRNE (84 aa)) folds into the PDZ 7 domain. A disordered region spans residues 1333 to 1362 (APFPVPSSSPSSLEDQSGTEPVSSEEDGSL). Over residues 1345-1354 (LEDQSGTEPV) the composition is skewed to polar residues. 2 PDZ domains span residues 1464–1547 (IIEI…YRDE) and 1560–1642 (PVDL…GRLR). At Thr1535 the chain carries Phosphothreonine. A compositionally biased stretch (polar residues) spans 1645 to 1668 (SWTSSRKTSQNSQGSQHSTHSSFH). Residues 1645 to 1669 (SWTSSRKTSQNSQGSQHSTHSSFHP) are disordered. The PDZ 10 domain occupies 1703 to 1789 (TVEIIRELSD…RIILQVVADT (87 aa)). The disordered stretch occupies residues 1805-1828 (YHLGSPTAEHHPEDTEEPLQMTAG).

As to quaternary structure, forms a ternary complex with PALS1 and CRB1. Component of a complex whose core is composed of ARHGAP17, AMOT, PALS1, INADL/PATJ and PARD3/PAR3. Forms a heterotrimeric complex composed of MMP5, LIN7B and PATJ; the N-terminal L27 domain of PALS1 interacts with the L27 domain of PATJ and the C-terminal L27 domain of PALS1 interacts with the L27 domain of LIN7B. Component of a complex composed of CRB3, PALS1 and PATJ. As part of the Crumbs complex; interacts with WWP1, the interaction is enhanced by AMOTL2 and facilitates WWP1 localization to the plasma membrane. The Crumbs complex promotes monoubiquitination of AMOTL2 by WWP1, which activates the Hippo signaling pathway. Interacts (via N-terminus) with PALS1/PALS (via PDZ domain). Interacts with TJP3/ZO-3 and CLDN1/claudin-1. Interacts with ASIC3, KCNJ10, KCNJ15, GRIN2A, GRIN2B, GRIN2C, GRIN2D, NLGN2, and HTR2A. Interacts with MPP7. Directly interacts with HTR4. Interacts (via PDZ domain 8) with WWC1 (via the ADDV motif). Interacts with SLC6A4. Interacts (via C-terminus) with ARHGEF18. Interacts with NPHP1. Interacts with PARD3/PAR3. Interacts (via PDZ1-6 domains) with TJP1/ZO1; the interaction is required for attachment and extension of TJP1/ZO1 condensates along the apical cell interface.

The protein resides in the cell junction. It localises to the tight junction. The protein localises to the apical cell membrane. Its subcellular location is the cytoplasm. It is found in the perinuclear region. Scaffolding protein that facilitates the localization of proteins to the cell membrane. Required for the correct formation of tight junctions and epithelial apico-basal polarity. Acts (via its L27 domain) as an apical connector and elongation factor for multistranded TJP1/ZO1 condensates that form a tight junction belt, thereby required for the formation of the tight junction-mediated cell barrier. Positively regulates epithelial cell microtubule elongation and cell migration, possibly via facilitating localization of PRKCI/aPKC and PAR3D/PAR3 at the leading edge of migrating cells. Plays a role in the correct reorientation of the microtubule-organizing center during epithelial migration. May regulate the surface expression and/or function of ASIC3 in sensory neurons. May recruit ARHGEF18 to apical cell-cell boundaries. This chain is InaD-like protein, found in Canis lupus familiaris (Dog).